The sequence spans 515 residues: Glucose-6-phosphate 1-dehydrogenase (515 aa).

Alanine 2 is modified (N-acetylalanine). Serine 8 is subject to Phosphoserine. Threonine 10 bears the Phosphothreonine mark. Residues 38–45 and arginine 72 contribute to the NADP(+) site; that span reads GASGDLAK. Lysine 89 carries the post-translational modification N6-acetyllysine. NADP(+) contacts are provided by tyrosine 147 and lysine 171. D-glucose 6-phosphate contacts are provided by residues lysine 171, 201-205, glutamate 239, and aspartate 258; that span reads HYLGK. Position 171 is an N6-(2-hydroxyisobutyryl)lysine; alternate (lysine 171). Lysine 171 carries the N6-acetyllysine; alternate modification. Histidine 263 (proton acceptor) is an active-site residue. Arginine 357 provides a ligand contact to NADP(+). The D-glucose 6-phosphate site is built by lysine 360 and arginine 365. Residues lysine 366, arginine 370, and arginine 393 each contribute to the NADP(+) site. A D-glucose 6-phosphate-binding site is contributed by glutamine 395. Residues 401-403 and 421-423 each bind NADP(+); these read YTK and DLT. The residue at position 403 (lysine 403) is an N6-acetyllysine. N6-acetyllysine is present on lysine 432. Arginine 487 contacts NADP(+). An N6-acetyllysine modification is found at lysine 497. NADP(+)-binding residues include tyrosine 503 and tryptophan 509. Tyrosine 503 carries the post-translational modification Phosphotyrosine.

This sequence belongs to the glucose-6-phosphate dehydrogenase family. In terms of assembly, homotetramer; dimer of dimers. Interacts with SIRT2; the interaction is enhanced by H(2)O(2) treatment. Forms a ternary complex with ALDOB and TP53; this interaction is direct. ALDOB stabilizes the complex inhibiting G6PD activity and keeping oxidative pentose phosphate metabolism in check. Acetylated by ELP3 at Lys-403; acetylation inhibits its homodimerization and enzyme activity. Deacetylated by SIRT2 at Lys-403; deacetylation stimulates its enzyme activity.

The protein localises to the cytoplasm. Its subcellular location is the cytosol. It is found in the membrane. It catalyses the reaction D-glucose 6-phosphate + NADP(+) = 6-phospho-D-glucono-1,5-lactone + NADPH + H(+). The protein operates within carbohydrate degradation; pentose phosphate pathway; D-ribulose 5-phosphate from D-glucose 6-phosphate (oxidative stage): step 1/3. Its function is as follows. Cytosolic glucose-6-phosphate dehydrogenase that catalyzes the first and rate-limiting step of the oxidative branch within the pentose phosphate pathway/shunt, an alternative route to glycolysis for the dissimilation of carbohydrates and a major source of reducing power and metabolic intermediates for fatty acid and nucleic acid biosynthetic processes. This Cricetulus griseus (Chinese hamster) protein is Glucose-6-phosphate 1-dehydrogenase (G6PD).